A 249-amino-acid chain; its full sequence is Putative adhesin RC1281 (249 aa).

The first 22 residues, 1-22 (MKKLLLIAAASTALLTSGLSFA), serve as a signal peptide directing secretion.

In terms of biological role, adheres to biotinylated epithelial (Vero cell) proteins. The sequence is that of Putative adhesin RC1281 from Rickettsia conorii (strain ATCC VR-613 / Malish 7).